The chain runs to 1711 residues: Serine/threonine-protein kinase MRCK beta (1711 aa).

The region spanning 76 to 342 is the Protein kinase domain; that stretch reads FEIIKVIGRG…IEDFKKHAFF (267 aa). ATP contacts are provided by residues 82-90 and K105; that span reads IGRGAFGEV. D200 (proton acceptor) is an active-site residue. Phosphoserine; by autocatalysis is present on residues S221 and S233. At T239 the chain carries Phosphothreonine; by autocatalysis. Residues 343–413 enclose the AGC-kinase C-terminal domain; the sequence is EGLNWENIRN…TTESCFSDRG (71 aa). The residue at position 423 (T423) is a Phosphothreonine. 2 coiled-coil regions span residues 431–815 and 878–939; these read QRDL…AHWE and ELQS…FRAD. The tract at residues 461–484 is disordered; it reads LQESTQTVQSLHGSSRALSNSNRD. A compositionally biased stretch (polar residues) spans 463–481; that stretch reads ESTQTVQSLHGSSRALSNS. At R671 the chain carries Omega-N-methylarginine. Position 954 is a phosphotyrosine (Y954). The segment at 969–1009 is disordered; that stretch reads SSASEQETQAPKPEASPSMSVAASEQQEDMARPPQRPSAVP. A Phorbol-ester/DAG-type zinc finger spans residues 1025-1075; that stretch reads AHQFSIKSFSSPTQCSHCTSLMVGLIRQGYACEVCSFACHVSCKDGAPQVC. In terms of domain architecture, PH spans 1095–1214; sequence GTAYKGHVKV…WVGILEGLQS (120 aa). In terms of domain architecture, CNH spans 1240–1513; sequence IKAILTAAIV…RPLNSEGTLN (274 aa). Positions 1583 to 1596 constitute a CRIB domain; it reads ISNPTNFNHVAHMG. Positions 1611–1711 are disordered; it reads AVPPSQEERP…EGLEQPACDT (101 aa). Positions 1641–1650 are enriched in polar residues; that stretch reads WPSSGGSEPS. Residues 1664 to 1675 are compositionally biased toward basic and acidic residues; sequence DFDKEPDSDSTK. A phosphoserine mark is found at S1680, S1682, S1686, S1690, and S1693.

The protein belongs to the protein kinase superfamily. AGC Ser/Thr protein kinase family. DMPK subfamily. Homodimer and homotetramer via the coiled coil regions. Interacts tightly with GTP-bound but not GDP-bound CDC42. Interacts with TJP1, when in the presence of catalytically active CDC42. Forms a tripartite complex with MYO18A and LURAP1 with the latter acting as an adapter connecting CDC42BPB and MYO18A. LURAP1 binding results in activation of CDC42BPB by abolition of its negative autoregulation. Interacts with STRIP1, STRN3 and SIKE1. Interacts with CPNE4 (via VWFA domain). Interacts with LURAP1. Interacts (via AGC-kinase C-terminal domain) with FAM89B/LRAP25 (via LRR repeat). Forms a tripartite complex with FAM89B/LRAP25 and LIMK1. Mg(2+) serves as cofactor. In terms of processing, proteolytically cleaved by caspases upon apoptosis induction. Expressed in all tissues examined, with high levels in heart, brain, placenta and lung.

Its subcellular location is the cytoplasm. The protein resides in the cell membrane. It is found in the cell junction. It localises to the cell projection. The protein localises to the lamellipodium. The catalysed reaction is L-seryl-[protein] + ATP = O-phospho-L-seryl-[protein] + ADP + H(+). It catalyses the reaction L-threonyl-[protein] + ATP = O-phospho-L-threonyl-[protein] + ADP + H(+). With respect to regulation, maintained in an inactive, closed conformation by an interaction between the kinase domain and the negative autoregulatory C-terminal coiled-coil region. Agonist binding to the phorbol ester binding site disrupts this, releasing the kinase domain to allow N-terminus-mediated dimerization and kinase activation by transautophosphorylation. Inhibited by chelerythrine chloride. In terms of biological role, serine/threonine-protein kinase which is an important downstream effector of CDC42 and plays a role in the regulation of cytoskeleton reorganization and cell migration. Regulates actin cytoskeletal reorganization via phosphorylation of PPP1R12C and MYL9/MLC2. In concert with MYO18A and LURAP1, is involved in modulating lamellar actomyosin retrograde flow that is crucial to cell protrusion and migration. Phosphorylates PPP1R12A. In concert with FAM89B/LRAP25 mediates the targeting of LIMK1 to the lamellipodium resulting in its activation and subsequent phosphorylation of CFL1 which is important for lamellipodial F-actin regulation. In Homo sapiens (Human), this protein is Serine/threonine-protein kinase MRCK beta.